Reading from the N-terminus, the 289-residue chain is Pyridoxal kinase PdxY (289 aa).

Residues Ser-9 and 44 to 45 (TQ) contribute to the substrate site. Residues Asp-112, Val-144, Glu-149, and Lys-182 each coordinate ATP. Asp-221 contributes to the substrate binding site.

This sequence belongs to the pyridoxine kinase family. PdxY subfamily. Homodimer. The cofactor is Mg(2+).

The enzyme catalyses pyridoxal + ATP = pyridoxal 5'-phosphate + ADP + H(+). It participates in cofactor metabolism; pyridoxal 5'-phosphate salvage; pyridoxal 5'-phosphate from pyridoxal: step 1/1. Its function is as follows. Pyridoxal kinase involved in the salvage pathway of pyridoxal 5'-phosphate (PLP). Catalyzes the phosphorylation of pyridoxal to PLP. This chain is Pyridoxal kinase PdxY, found in Vibrio parahaemolyticus serotype O3:K6 (strain RIMD 2210633).